We begin with the raw amino-acid sequence, 1427 residues long: Tonsoku-like protein (1427 aa).

Positions 1–21 (MTSTKEIKQLQKAKSKAQSSN) are disordered. The segment covering 10–21 (LQKAKSKAQSSN) has biased composition (low complexity). TPR repeat units follow at residues 27-60 (ASLC…SEIL), 67-100 (AVAN…ARSV), 107-147 (QRAL…VDER), 162-195 (ARLL…AEKN), 202-235 (YRAN…ARKM), 242-275 (SECF…GSQQ), 311-344 (LDLS…AEAL), and 352-385 (AVIH…RKGN). Positions 465–502 (LSLDQSEDEDEEDEVDNSEPLEDSDIQYSESDDEDLEG) are disordered. Positions 469–501 (QSEDEDEEDEVDNSEPLEDSDIQYSESDDEDLE) are enriched in acidic residues. ANK repeat units lie at residues 522–551 (KGET…PVNV), 555–584 (CGWT…NVND), and 591–620 (GGIT…SVTV). 3 disordered regions span residues 692–801 (PLLR…SESG), 865–922 (KKKR…KMNQ), and 941–961 (IMTQ…QAMP). Residues 742–761 (DDSSSSDNPDSDCSLSPLRP) are compositionally biased toward low complexity. Polar residues predominate over residues 773 to 783 (SPQEVPSSQEL). Residues 871–880 (SEHNATRETT) show a composition bias toward basic and acidic residues. Residues 881 to 890 (SRSQNNSSTI) show a composition bias toward polar residues. Low complexity predominate over residues 899-910 (SCSSRGSLSLKK). 7 LRR repeats span residues 1113–1137 (QASL…MMAA), 1141–1168 (MPRL…AFET), 1174–1197 (FPCL…ALAS), 1234–1258 (TGNM…VLKT), 1293–1316 (DCPL…LLAR), 1321–1346 (CPSL…LLNG), and 1377–1400 (SDHI…ALQQ).

Belongs to the Tonsoku family. Component of the MMS22L-TONSL complex. Binds histones, with a strong preference for histone H3.1 (histones H3.1 and H3-4/H3.1t).

Its subcellular location is the nucleus. It localises to the chromosome. The protein resides in the cytoplasm. Its function is as follows. Component of the MMS22L-TONSL complex, a complex that promotes homologous recombination-mediated repair of double-strand breaks (DSBs) at stalled or collapsed replication forks. The MMS22L-TONSL complex is required to maintain genome integrity during DNA replication. It mediates the assembly of RAD51 filaments on single-stranded DNA (ssDNA): the MMS22L-TONSL complex is recruited to DSBs following histone replacement by histone chaperones and eviction of the replication protein A complex (RPA/RP-A) from DSBs. Following recruitment to DSBs, the TONSL-MMS22L complex promotes recruitment of RAD51 filaments and subsequent homologous recombination. Within the complex, TONSL acts as a histone reader, which recognizes and binds newly synthesized histones following their replacement by histone chaperones. The polypeptide is Tonsoku-like protein (tonsl) (Danio rerio (Zebrafish)).